The following is a 366-amino-acid chain: Chorismate synthase (366 aa).

Arg48 and Arg54 together coordinate NADP(+). Residues 125-127, 238-239, Gly278, 293-297, and Arg319 contribute to the FMN site; these read RSS, NA, and KPTSS.

This sequence belongs to the chorismate synthase family. In terms of assembly, homotetramer. It depends on FMNH2 as a cofactor.

It carries out the reaction 5-O-(1-carboxyvinyl)-3-phosphoshikimate = chorismate + phosphate. It functions in the pathway metabolic intermediate biosynthesis; chorismate biosynthesis; chorismate from D-erythrose 4-phosphate and phosphoenolpyruvate: step 7/7. Catalyzes the anti-1,4-elimination of the C-3 phosphate and the C-6 proR hydrogen from 5-enolpyruvylshikimate-3-phosphate (EPSP) to yield chorismate, which is the branch point compound that serves as the starting substrate for the three terminal pathways of aromatic amino acid biosynthesis. This reaction introduces a second double bond into the aromatic ring system. In Burkholderia vietnamiensis (strain G4 / LMG 22486) (Burkholderia cepacia (strain R1808)), this protein is Chorismate synthase.